The following is an 86-amino-acid chain: Electron transfer flavoprotein regulatory factor 1 (86 aa).

It belongs to the complex I LYR family. In terms of assembly, homotetramer. Interacts with NDUFAB1. Interacts with ETFA. Interacts with ETFB.

It is found in the mitochondrion. Functionally, acts as a regulator of the electron transfer flavoprotein by promoting the removal of flavin from the ETF holoenzyme (composed of ETFA and ETFB). The chain is Electron transfer flavoprotein regulatory factor 1 from Mus musculus (Mouse).